A 321-amino-acid polypeptide reads, in one-letter code: MLRVLFAGTPEVAVPSLRMLAKDTEHFEVVAVLTRPDAPTGRGRKIMPSPVKMAARELGLDVIECDPADECFLSALKATGAQCAAVVAYGKILRESVLEALPLGWYNLHFSLLPQWRGAAPVQRAIWAGDEVTGCSVFRITAGMDRGPVLGQSTVTIGAHENAGELLDRLAEDGAGLLAASLQALDEGVVNAVDQPAGSYDVAAKITTQDAHMRFDVPAFALDRQIRACTPAPGAWANLHPHGDDANETLHVSKAIPADMTADESPRNLKPGELHVTKHHVWVGTSTDPLELLVVKAAGKREMGAPEWARGAHLAEGAYLD.

Position 111 to 114 (111 to 114) interacts with (6S)-5,6,7,8-tetrahydrofolate; sequence SLLP.

Belongs to the Fmt family.

It catalyses the reaction L-methionyl-tRNA(fMet) + (6R)-10-formyltetrahydrofolate = N-formyl-L-methionyl-tRNA(fMet) + (6S)-5,6,7,8-tetrahydrofolate + H(+). Functionally, attaches a formyl group to the free amino group of methionyl-tRNA(fMet). The formyl group appears to play a dual role in the initiator identity of N-formylmethionyl-tRNA by promoting its recognition by IF2 and preventing the misappropriation of this tRNA by the elongation apparatus. The chain is Methionyl-tRNA formyltransferase from Bifidobacterium animalis subsp. lactis (strain AD011).